Consider the following 321-residue polypeptide: Bifunctional ligase/repressor BirA (321 aa).

A DNA-binding region (H-T-H motif) is located at residues 22–41; that stretch reads GEQLGETLGMSRAAINKHIQ. Residues 67–254 enclose the BPL/LPL catalytic domain; it reads LNAKQILGQL…ELRAALELFE (188 aa). Residues 89 to 91, glutamine 112, 116 to 118, and lysine 183 contribute to the biotin site; these read STN and RGR.

This sequence belongs to the biotin--protein ligase family. In terms of assembly, monomer in solution. Interacts with BCCP. Homodimerizes to bind DNA. Interaction with the corepressor bio-5'-AMP increases dimerization.

The enzyme catalyses biotin + L-lysyl-[protein] + ATP = N(6)-biotinyl-L-lysyl-[protein] + AMP + diphosphate + H(+). The switch between the enzymatic activity and the repressor activity is regulated by cellular demand for biotin. The switch occurs by swapping of protein interaction partners by holoBirA. In conditions of high biotin demand, holoBirA associates with apoBCCP to transfer biotin. In conditions of low biotin demand, holoBirA dimerizes, binds DNA and represses transcription of the biotin operon. Acts both as a biotin--[acetyl-CoA-carboxylase] ligase and a biotin-operon repressor. In the presence of ATP, BirA activates biotin to form the BirA-biotinyl-5'-adenylate (BirA-bio-5'-AMP or holoBirA) complex. HoloBirA can either transfer the biotinyl moiety to the biotin carboxyl carrier protein (BCCP) subunit of acetyl-CoA carboxylase, or bind to the biotin operator site and inhibit transcription of the operon. In Escherichia coli (strain K12), this protein is Bifunctional ligase/repressor BirA.